The chain runs to 208 residues: Large ribosomal subunit protein uL4 (208 aa).

A disordered region spans residues 46-84 (QGTHKAKTRAEVRGGGRKPFRQKGTGNARQGSTRSPLMI). Over residues 69 to 80 (GTGNARQGSTRS) the composition is skewed to polar residues.

The protein belongs to the universal ribosomal protein uL4 family. In terms of assembly, part of the 50S ribosomal subunit.

One of the primary rRNA binding proteins, this protein initially binds near the 5'-end of the 23S rRNA. It is important during the early stages of 50S assembly. It makes multiple contacts with different domains of the 23S rRNA in the assembled 50S subunit and ribosome. Its function is as follows. Forms part of the polypeptide exit tunnel. The chain is Large ribosomal subunit protein uL4 from Chlorobium limicola (strain DSM 245 / NBRC 103803 / 6330).